The primary structure comprises 81 residues: Cytochrome b559 subunit alpha (81 aa).

Residues 21 to 35 traverse the membrane as a helical segment; that stretch reads VIHSITIPMLFIAGW. His-23 contacts heme.

This sequence belongs to the PsbE/PsbF family. Heterodimer of an alpha subunit and a beta subunit. PSII is composed of 1 copy each of membrane proteins PsbA, PsbB, PsbC, PsbD, PsbE, PsbF, PsbH, PsbI, PsbJ, PsbK, PsbL, PsbM, PsbT, PsbX, PsbY, PsbZ, Psb30/Ycf12, peripheral proteins PsbO, CyanoQ (PsbQ), PsbU, PsbV and a large number of cofactors. It forms dimeric complexes. The cofactor is heme b.

It localises to the cellular thylakoid membrane. Functionally, this b-type cytochrome is tightly associated with the reaction center of photosystem II (PSII). PSII is a light-driven water:plastoquinone oxidoreductase that uses light energy to abstract electrons from H(2)O, generating O(2) and a proton gradient subsequently used for ATP formation. It consists of a core antenna complex that captures photons, and an electron transfer chain that converts photonic excitation into a charge separation. This is Cytochrome b559 subunit alpha from Crocosphaera subtropica (strain ATCC 51142 / BH68) (Cyanothece sp. (strain ATCC 51142)).